The chain runs to 1068 residues: Carbamoyl phosphate synthase large chain (1068 aa).

The interval Met-1–Glu-401 is carboxyphosphate synthetic domain. Arg-129, Arg-169, Gly-175, Gly-176, Lys-208, Val-210, Glu-215, Gly-241, Ile-242, His-243, Gln-284, and Glu-298 together coordinate ATP. Positions Arg-133–Leu-327 constitute an ATP-grasp 1 domain. Residues Gln-284, Glu-298, and Asn-300 each coordinate Mg(2+). Mn(2+) is bound by residues Gln-284, Glu-298, and Asn-300. The oligomerization domain stretch occupies residues Ile-402–Val-549. Residues Glu-550–Asn-932 are carbamoyl phosphate synthetic domain. An ATP-grasp 2 domain is found at Asp-674 to Leu-864. Arg-710, Lys-749, Leu-751, Glu-755, Gly-780, Val-781, His-782, Ser-783, Gln-823, and Glu-835 together coordinate ATP. Gln-823, Glu-835, and Asn-837 together coordinate Mg(2+). The Mn(2+) site is built by Gln-823, Glu-835, and Asn-837. Residues Met-933 to Asn-1068 enclose the MGS-like domain. Residues Met-933–Asn-1068 are allosteric domain.

This sequence belongs to the CarB family. In terms of assembly, composed of two chains; the small (or glutamine) chain promotes the hydrolysis of glutamine to ammonia, which is used by the large (or ammonia) chain to synthesize carbamoyl phosphate. Tetramer of heterodimers (alpha,beta)4. Mg(2+) serves as cofactor. It depends on Mn(2+) as a cofactor.

It carries out the reaction hydrogencarbonate + L-glutamine + 2 ATP + H2O = carbamoyl phosphate + L-glutamate + 2 ADP + phosphate + 2 H(+). The catalysed reaction is hydrogencarbonate + NH4(+) + 2 ATP = carbamoyl phosphate + 2 ADP + phosphate + 2 H(+). It functions in the pathway amino-acid biosynthesis; L-arginine biosynthesis; carbamoyl phosphate from bicarbonate: step 1/1. Its pathway is pyrimidine metabolism; UMP biosynthesis via de novo pathway; (S)-dihydroorotate from bicarbonate: step 1/3. Functionally, large subunit of the glutamine-dependent carbamoyl phosphate synthetase (CPSase). CPSase catalyzes the formation of carbamoyl phosphate from the ammonia moiety of glutamine, carbonate, and phosphate donated by ATP, constituting the first step of 2 biosynthetic pathways, one leading to arginine and/or urea and the other to pyrimidine nucleotides. The large subunit (synthetase) binds the substrates ammonia (free or transferred from glutamine from the small subunit), hydrogencarbonate and ATP and carries out an ATP-coupled ligase reaction, activating hydrogencarbonate by forming carboxy phosphate which reacts with ammonia to form carbamoyl phosphate. This Clostridium botulinum (strain Kyoto / Type A2) protein is Carbamoyl phosphate synthase large chain.